A 379-amino-acid chain; its full sequence is MSTFFTNLRRVNKVYPNQATFLTDNTRLLTTTPAGFTNVLRAPSTRNLGNGRFEPGYNLSNNQFVSAGDINRITRGNDVPRIRNVFQGISDPQIGSLNQLRRADNVPDAGLHVKRTRSDAVKQNFPETNVRSADGVDRALQQNPRLNTYLQGAKTAGVGVLLAGGAYLTFSAATLVQDIIQALNNTGGSYYVRGADGGDTADACLLLSRTCQRDPNMNTSDVVICNHDPLIADTAQLQAICSGFNYQQEQTVCRQSDPAADPDSPQFVDVSDLLPGQTIMCIEPYNLGDLIGDLGLDHLLGEDGLVGKSSNSSDSVSNKLMPLIWLIGAVLFLGLIIYLIYRFVIKGGAGAAGAARAPPVIVLPPPPTQQTYNSTKQQI.

A helical transmembrane segment spans residues 156–176; sequence AGVGVLLAGGAYLTFSAATLV. N-linked (GlcNAc...) asparagine; by host glycosylation is present at asparagine 184. The chain crosses the membrane as a helical span at residues 320–340; it reads LMPLIWLIGAVLFLGLIIYLI.

This sequence belongs to the baculoviridae E56 family.

It is found in the virion membrane. Its function is as follows. Structural protein that is specific for occlusion-derived virus (ODV) envelopes but not of budded virus (BV). In Choristoneura fumiferana nuclear polyhedrosis virus (CfMNPV), this protein is Occlusion-derived virus envelope protein E56 (ODVP6E).